The chain runs to 204 residues: MAFNARSCCFASSNERVTCNCNCLKDQPVPRMKHSKDPFEAAMEEQEESPVETEQTLEGDERAVKKCKTSVVAEAKNKDEVEFTKNITGADPVTRANKMQKILSQFTEEQMSRYESFRRSGFKKSDMEKLVQRITGGPKMDDTMNIVVRGIAKMFVGDLVETARVVMRERKESGPIRPCHIRESYRRLKLQGKVPQRSVQRLFR.

The tract at residues Pro38 to Asp60 is disordered. Residues Ala42–Glu58 are compositionally biased toward acidic residues. The 90-residue stretch at Phe106 to Pro195 folds into the Histone-fold domain.

This sequence belongs to the TAF11 family. As to quaternary structure, component of the TFIID complex. TFIID is composed of TATA binding protein (TBP) and a number of TBP-associated factors (TAFs) whose MWs range from 14-217 kDa. As to expression, expressed in roots, leaves and inflorescences.

The protein resides in the nucleus. Its function is as follows. TAFs are components of the transcription factor IID (TFIID) complex that is essential for mediating regulation of RNA polymerase transcription. This Arabidopsis thaliana (Mouse-ear cress) protein is Transcription initiation factor TFIID subunit 11b (TAF11B).